The primary structure comprises 274 residues: uncharacterized protein (274 aa).

The N-terminal stretch at 1–30 (MTVYTPTSERQAPATTHRQMWALGDYAAIA) is a signal peptide.

This sequence to M.tuberculosis Rv1405c.

This is an uncharacterized protein from Mycobacterium tuberculosis (strain CDC 1551 / Oshkosh).